An 87-amino-acid chain; its full sequence is HssA/B-like protein 58 (87 aa).

A compositionally biased stretch (polar residues) spans 1–13 (MTILSAITSISRP). The disordered stretch occupies residues 1–31 (MTILSAITSISRPNKSSKSVISSNGGSSLSM). The span at 14 to 31 (NKSSKSVISSNGGSSLSM) shows a compositional bias: low complexity.

This sequence belongs to the hssA/B family.

The chain is HssA/B-like protein 58 (hssl58) from Dictyostelium discoideum (Social amoeba).